The chain runs to 309 residues: Porphobilinogen deaminase (309 aa).

The residue at position 244 (C244) is an S-(dipyrrolylmethanemethyl)cysteine.

The protein belongs to the HMBS family. Monomer. Dipyrromethane serves as cofactor.

It carries out the reaction 4 porphobilinogen + H2O = hydroxymethylbilane + 4 NH4(+). Its pathway is porphyrin-containing compound metabolism; protoporphyrin-IX biosynthesis; coproporphyrinogen-III from 5-aminolevulinate: step 2/4. In terms of biological role, tetrapolymerization of the monopyrrole PBG into the hydroxymethylbilane pre-uroporphyrinogen in several discrete steps. This chain is Porphobilinogen deaminase, found in Listeria monocytogenes serotype 4b (strain CLIP80459).